The primary structure comprises 217 residues: Pyridoxine/pyridoxamine 5'-phosphate oxidase (217 aa).

FMN contacts are provided by residues 66 to 71 (RMVLLK), 81 to 82 (FT), arginine 87, lysine 88, and glutamine 110. Lysine 71 is a binding site for substrate. Residues tyrosine 128, arginine 132, and serine 136 each coordinate substrate. FMN contacts are provided by residues 145–146 (QS) and tryptophan 190. Position 196-198 (196-198 (RLH)) interacts with substrate. Arginine 200 is a binding site for FMN.

The protein belongs to the pyridoxamine 5'-phosphate oxidase family. As to quaternary structure, homodimer. FMN serves as cofactor.

It carries out the reaction pyridoxamine 5'-phosphate + O2 + H2O = pyridoxal 5'-phosphate + H2O2 + NH4(+). The catalysed reaction is pyridoxine 5'-phosphate + O2 = pyridoxal 5'-phosphate + H2O2. It participates in cofactor metabolism; pyridoxal 5'-phosphate salvage; pyridoxal 5'-phosphate from pyridoxamine 5'-phosphate: step 1/1. Its pathway is cofactor metabolism; pyridoxal 5'-phosphate salvage; pyridoxal 5'-phosphate from pyridoxine 5'-phosphate: step 1/1. Its function is as follows. Catalyzes the oxidation of either pyridoxine 5'-phosphate (PNP) or pyridoxamine 5'-phosphate (PMP) into pyridoxal 5'-phosphate (PLP). This is Pyridoxine/pyridoxamine 5'-phosphate oxidase from Colwellia psychrerythraea (strain 34H / ATCC BAA-681) (Vibrio psychroerythus).